Consider the following 419-residue polypeptide: UDP-N-acetylglucosamine 1-carboxyvinyltransferase (419 aa).

Position 22–23 (Lys-22–Asn-23) interacts with phosphoenolpyruvate. Arg-93 provides a ligand contact to UDP-N-acetyl-alpha-D-glucosamine. Residue Cys-117 is the Proton donor of the active site. Cys-117 carries the 2-(S-cysteinyl)pyruvic acid O-phosphothioketal modification. Positions 306 and 328 each coordinate UDP-N-acetyl-alpha-D-glucosamine.

Belongs to the EPSP synthase family. MurA subfamily.

The protein localises to the cytoplasm. The catalysed reaction is phosphoenolpyruvate + UDP-N-acetyl-alpha-D-glucosamine = UDP-N-acetyl-3-O-(1-carboxyvinyl)-alpha-D-glucosamine + phosphate. It functions in the pathway cell wall biogenesis; peptidoglycan biosynthesis. In terms of biological role, cell wall formation. Adds enolpyruvyl to UDP-N-acetylglucosamine. This chain is UDP-N-acetylglucosamine 1-carboxyvinyltransferase, found in Vesicomyosocius okutanii subsp. Calyptogena okutanii (strain HA).